The sequence spans 282 residues: Glycine betaine/carnitine transport permease protein GbuB (282 aa).

6 helical membrane-spanning segments follow: residues 44-64 (VFDL…TFWV), 70-90 (KWGL…LDFW), 99-119 (LVLT…IWMA), 140-160 (AFVY…PGVV), 220-240 (IMLA…GLGT), and 251-271 (AGGG…LDRL). Residues 93 to 272 (MTQTLTLVLT…IVAIILDRLT (180 aa)) form the ABC transmembrane type-1 domain.

Belongs to the binding-protein-dependent transport system permease family. In terms of assembly, the complex is composed of two ATP-binding proteins (GbuA), two transmembrane proteins (GbuB) and a solute-binding protein (GbuC).

The protein resides in the cell membrane. With respect to regulation, the complex is activated by an osmotic gradient or by low temperature. Part of the ABC transporter complex GbuABC involved in glycine betaine uptake. Responsible for the translocation of the substrate across the membrane. Involved, with BetL and OpuC, in osmoprotection and cryoprotection of Listeria. Can also uptake carnitine when carnitine is abundant in the growth medium. The chain is Glycine betaine/carnitine transport permease protein GbuB (gbuB) from Listeria monocytogenes serotype 1/2a (strain 10403S).